A 156-amino-acid chain; its full sequence is Small ribosomal subunit protein uS7c (156 aa).

This sequence belongs to the universal ribosomal protein uS7 family. In terms of assembly, part of the 30S ribosomal subunit.

It localises to the plastid. One of the primary rRNA binding proteins, it binds directly to 16S rRNA where it nucleates assembly of the head domain of the 30S subunit. In Prototheca wickerhamii, this protein is Small ribosomal subunit protein uS7c (rps7).